The sequence spans 61 residues: UPF0434 protein Sama_1339 (61 aa).

It belongs to the UPF0434 family.

In Shewanella amazonensis (strain ATCC BAA-1098 / SB2B), this protein is UPF0434 protein Sama_1339.